The following is a 189-amino-acid chain: ECF RNA polymerase sigma-E factor (189 aa).

Residues 1–153 (MAEQLTDQAL…TAITLRELEG (153 aa)) form a binds RNAP core region. The sigma-70 factor domain-2 stretch occupies residues 25 to 92 (LVSRYQNKVA…KNYLTAQGRR (68 aa)). The Polymerase core binding signature appears at 48 to 61 (DVVQESFIKAYRSI). Positions 129-180 (RIVFDTIHNLPEDLKTAITLRELEGLSYEDIAEIMDCPVGTVRSRIFRAREM) are sigma-70 factor domain-4. The segment at residues 156–175 (YEDIAEIMDCPVGTVRSRIF) is a DNA-binding region (H-T-H motif).

This sequence belongs to the sigma-70 factor family. ECF subfamily. As to quaternary structure, interacts transiently with the RNAP catalytic core formed by RpoA, RpoB, RpoC and RpoZ (2 alpha, 1 beta, 1 beta' and 1 omega subunit) to form the RNAP holoenzyme that can initiate transcription. Interacts 1:1 with anti-sigma-E factor RseA which prevents binding to RNAP catalytic core.

It localises to the cytoplasm. Its activity is regulated as follows. ECF sigma-E is held in an inactive form by its cognate anti-sigma factor (RseA) until released by regulated intramembrane proteolysis (RIP). RIP occurs when an extracytoplasmic signal (periplasmic stress and excess LPS) triggers a concerted proteolytic cascade to transmit information and elicit cellular responses. The anti-sigma factor RseA is an inner membrane protein, binding sigma-E in the cytoplasm and RseB in the periplasm. RseA is first cut extracytoplasmically (site-1 protease, S1P, by DegS), then within the membrane itself (site-2 protease, S2P, by RseP), while cytoplasmic proteases (predominantly ClpX-ClpP) finish degrading the regulatory protein, liberating sigma-E. Degradation of RseA requires 2 signals to activate DegS; an outer membrane protein (OMP) signal activates DegS, while an LPS signal causes release of RseB from RseA, freeing RseA to be cleaved. Functionally, sigma factors are initiation factors that promote the attachment of RNA polymerase (RNAP) to specific initiation sites and are then released. Extracytoplasmic function (ECF) sigma-E controls the envelope stress response, responding to periplasmic protein stress, increased levels of periplasmic lipopolysaccharide (LPS) as well as heat shock and oxidative stress; it controls protein processing in the extracytoplasmic compartment. The sequence is that of ECF RNA polymerase sigma-E factor (rpoE) from Haemophilus influenzae (strain ATCC 51907 / DSM 11121 / KW20 / Rd).